The sequence spans 495 residues: Probable cobyric acid synthase (495 aa).

The GATase cobBQ-type domain occupies 256 to 441 (DVDIAVIRLT…LHGLFDNVNI (186 aa)). Cys-334 functions as the Nucleophile in the catalytic mechanism. His-433 is an active-site residue.

This sequence belongs to the CobB/CobQ family. CobQ subfamily.

The protein operates within cofactor biosynthesis; adenosylcobalamin biosynthesis. In terms of biological role, catalyzes amidations at positions B, D, E, and G on adenosylcobyrinic A,C-diamide. NH(2) groups are provided by glutamine, and one molecule of ATP is hydrogenolyzed for each amidation. In Methanococcoides burtonii (strain DSM 6242 / NBRC 107633 / OCM 468 / ACE-M), this protein is Probable cobyric acid synthase.